The chain runs to 317 residues: Acetyl-coenzyme A carboxylase carboxyl transferase subunit alpha (317 aa).

A CoA carboxyltransferase C-terminal domain is found at 37 to 292 (RLEKKAEKLR…RICLKKHLDD (256 aa)).

Belongs to the AccA family. Acetyl-CoA carboxylase is a heterohexamer composed of biotin carboxyl carrier protein (AccB), biotin carboxylase (AccC) and two subunits each of ACCase subunit alpha (AccA) and ACCase subunit beta (AccD).

The protein resides in the cytoplasm. The enzyme catalyses N(6)-carboxybiotinyl-L-lysyl-[protein] + acetyl-CoA = N(6)-biotinyl-L-lysyl-[protein] + malonyl-CoA. It functions in the pathway lipid metabolism; malonyl-CoA biosynthesis; malonyl-CoA from acetyl-CoA: step 1/1. Component of the acetyl coenzyme A carboxylase (ACC) complex. First, biotin carboxylase catalyzes the carboxylation of biotin on its carrier protein (BCCP) and then the CO(2) group is transferred by the carboxyltransferase to acetyl-CoA to form malonyl-CoA. The chain is Acetyl-coenzyme A carboxylase carboxyl transferase subunit alpha from Syntrophotalea carbinolica (strain DSM 2380 / NBRC 103641 / GraBd1) (Pelobacter carbinolicus).